The following is a 180-amino-acid chain: Hypoxanthine-guanine phosphoribosyltransferase (180 aa).

Residues K43 and G44 each coordinate diphosphate. Residues E99 and D100 each coordinate Mg(2+). Catalysis depends on D103, which acts as the Proton acceptor. GMP contacts are provided by residues K131, 152 to 153, and D159; that span reads FV. R165 provides a ligand contact to diphosphate.

Belongs to the purine/pyrimidine phosphoribosyltransferase family. Mg(2+) serves as cofactor.

The protein localises to the cytoplasm. It carries out the reaction IMP + diphosphate = hypoxanthine + 5-phospho-alpha-D-ribose 1-diphosphate. It catalyses the reaction GMP + diphosphate = guanine + 5-phospho-alpha-D-ribose 1-diphosphate. It participates in purine metabolism; IMP biosynthesis via salvage pathway; IMP from hypoxanthine: step 1/1. It functions in the pathway purine metabolism; GMP biosynthesis via salvage pathway; GMP from guanine: step 1/1. Its function is as follows. Purine salvage pathway enzyme that catalyzes the transfer of the ribosyl-5-phosphate group from 5-phospho-alpha-D-ribose 1-diphosphate (PRPP) to the N9 position of the 6-oxopurines hypoxanthine and guanine to form the corresponding ribonucleotides IMP (inosine 5'-monophosphate) and GMP (guanosine 5'-monophosphate), with the release of PPi. In Streptococcus pneumoniae serotype 4 (strain ATCC BAA-334 / TIGR4), this protein is Hypoxanthine-guanine phosphoribosyltransferase (hpt).